The following is a 653-amino-acid chain: Sulfate transporter 1.2 (653 aa).

A disordered region spans residues 1–30; the sequence is MSSRAHPVDGSPATDGGHVPMKPSPTRHKV. The Cytoplasmic segment spans residues 1 to 91; that stretch reads MSSRAHPVDG…GRNYTFKKFR (91 aa). A helical membrane pass occupies residues 92–112; it reads GDLISGLTIASLCIPQDIGYA. Residues 113–116 are Extracellular-facing; that stretch reads KLAN. The chain crosses the membrane as a helical span at residues 117–137; sequence LDPKYGLYSSFVPPLVYACMG. At 138–141 the chain is on the cytoplasmic side; that stretch reads SSRD. The helical transmembrane segment at 142–162 threads the bilayer; it reads IAIGPVAVVSLLLGTLLRAEI. Topologically, residues 163-173 are extracellular; the sequence is DPNTSPDEYLR. Helical transmembrane passes span 174 to 194 and 195 to 215; these read LAFT…FFRL and GFLI…GAAI. Over 216–253 the chain is Extracellular; it reads TIALQQLKGFLGIKKFTKKTDIISVLESVFKAAHHGWN. The helical transmembrane segment at 254-274 threads the bilayer; sequence WQTILIGASFLTFLLTSKIIG. Over 275–280 the chain is Cytoplasmic; the sequence is KKSKKL. Residues 281–301 traverse the membrane as a helical segment; it reads FWVPAIAPLISVIVSTFFVYI. Topologically, residues 302–339 are extracellular; that stretch reads TRADKQGVQIVKHLDQGINPSSFHLIYFTGDNLAKGIR. Residues 340–360 form a helical membrane-spanning segment; the sequence is IGVVAGMVALTEAVAIGRTFA. Residues 361–372 lie on the Cytoplasmic side of the membrane; the sequence is AMKDYQIDGNKE. A helical transmembrane segment spans residues 373-393; it reads MVALGMMNVVGSMSSCYVATG. The Extracellular segment spans residues 394–409; that stretch reads SFSRSAVNFMAGCQTA. Residues 410 to 430 traverse the membrane as a helical segment; the sequence is VSNIIMSIVVLLTLLFLTPLF. At 431 to 438 the chain is on the cytoplasmic side; it reads KYTPNAIL. A helical transmembrane segment spans residues 439-459; the sequence is AAIIINAVIPLIDIQAAILIF. Residues 460-466 lie on the Extracellular side of the membrane; sequence KVDKLDF. A helical transmembrane segment spans residues 467–487; it reads IACIGAFFGVIFVSVEIGLLI. The Cytoplasmic portion of the chain corresponds to 488–653; sequence AVSISFAKIL…ACCPKLSNEV (166 aa). The STAS domain occupies 522–645; sequence QYPEATMVPG…LTVADAVEAC (124 aa).

Belongs to the SLC26A/SulP transporter (TC 2.A.53.1) family. Homodimer. Interacts with OASA1 through its STAS domain. In terms of tissue distribution, expressed in lateral root cap, root hairs, epidermal and cortical cells of roots.

It is found in the cell membrane. With respect to regulation, interaction with OASA1 negatively impacts the transporter activity. High-affinity H(+)/sulfate cotransporter that mediates the uptake of the environmental sulfate by plant roots. Plays a central role in the regulation of sulfate assimilation. Unable to transport molybdate. The protein is Sulfate transporter 1.2 (SULTR1;2) of Arabidopsis thaliana (Mouse-ear cress).